The following is a 362-amino-acid chain: S-adenosylmethionine decarboxylase proenzyme 2 (362 aa).

Catalysis depends on residues Glu9 and Glu12. Glu68 contacts substrate. Ser69 serves as the catalytic Schiff-base intermediate with substrate; via pyruvic acid. Ser69 is modified (pyruvic acid (Ser); by autocatalysis). The Proton donor; for catalytic activity role is filled by Cys83. Active-site proton acceptor; for processing activity residues include Ser232 and His245. Glu249 provides a ligand contact to substrate.

Belongs to the eukaryotic AdoMetDC family. Requires pyruvate as cofactor. Post-translationally, is synthesized initially as an inactive proenzyme. Formation of the active enzyme involves a self-maturation process in which the active site pyruvoyl group is generated from an internal serine residue via an autocatalytic post-translational modification. Two non-identical subunits are generated from the proenzyme in this reaction, and the pyruvate is formed at the N-terminus of the alpha chain, which is derived from the carboxyl end of the proenzyme. The post-translation cleavage follows an unusual pathway, termed non-hydrolytic serinolysis, in which the side chain hydroxyl group of the serine supplies its oxygen atom to form the C-terminus of the beta chain, while the remainder of the serine residue undergoes an oxidative deamination to produce ammonia and the pyruvoyl group blocking the N-terminus of the alpha chain.

The catalysed reaction is S-adenosyl-L-methionine + H(+) = S-adenosyl 3-(methylsulfanyl)propylamine + CO2. The protein operates within amine and polyamine biosynthesis; S-adenosylmethioninamine biosynthesis; S-adenosylmethioninamine from S-adenosyl-L-methionine: step 1/1. In terms of biological role, essential for biosynthesis of the polyamines spermidine and spermine. Essential for polyamine homeostasis, and normal plant embryogenesis, growth and development. The sequence is that of S-adenosylmethionine decarboxylase proenzyme 2 from Arabidopsis thaliana (Mouse-ear cress).